Reading from the N-terminus, the 566-residue chain is Sorting nexin lst-4 (566 aa).

One can recognise an SH3 domain in the interval 1-61; it reads MAQVKAEYDF…PESYVTPYQA (61 aa). The tract at residues 59–179 is disordered; that stretch reads YQASRPPPVL…DRGSNKVNKN (121 aa). Residues 63 to 77 show a composition bias toward pro residues; sequence RPPPVLPPPLPPTSS. The span at 127–140 shows a compositional bias: acidic residues; sequence DDFDDEWTDEDDEQ. The segment covering 143 to 154 has biased composition (polar residues); sequence TRPNVQSSIGSN. Positions 155–173 are enriched in basic and acidic residues; it reads SRRDLSRSHSEHGGPDRGS. Residues 227–339 form the PX domain; sequence YTCIVDKPKK…HFISCTDEKD (113 aa). The 205-residue stretch at 362 to 566 folds into the BAR domain; that stretch reads TVPHQPLDPN…KLTSLAARYD (205 aa).

It belongs to the sorting nexin family. In terms of assembly, homodimer. Isoform d interacts (via SH3 domain) with dyn-1. As to expression, expressed in vulval precursor cells (VPCs) and apoptotic germ cells. Colocalizes with actin, dyn-1 and rab-5 in early phagosomes.

It localises to the cytoplasm. The protein resides in the cytoplasmic vesicle. Its subcellular location is the phagosome membrane. Functionally, involved in the signaling of vulval development by acting as a negative regulator of epidermal growth factor receptor (EGFR) signaling. Aids in phagosomal membrane tubule formation which is required for phagosomal fusion with endosomes and lysosomes. Also recruits rab-7 to phagosomes by an interaction with dyn-1. These are events leading to phagosome maturation which is a step in apoptotic cell corpse clearance. Binds phosphatidylinositol-3,4,5-trisphosphate. The polypeptide is Sorting nexin lst-4 (Caenorhabditis elegans).